The primary structure comprises 358 residues: GMP reductase (358 aa).

NADP(+)-binding positions include 26-27, Lys-78, 130-132, and 181-182; these read SR, DVA, and IG. K(+)-binding residues include Gly-182, Gly-184, and Cys-187. Cys-187 acts as the Thioimidate intermediate in catalysis. The Proton donor/acceptor role is filled by Thr-189. Arg-190 serves as a coordination point for K(+). GMP is bound by residues 220–222, 243–244, 269–271, and 287–291; these read DGG, GG, GMS, and RASEG. NADP(+) is bound by residues Met-270, 286-287, and 315-318; these read YR and SACT.

The protein belongs to the IMPDH/GMPR family. GuaC type 1 subfamily. In terms of assembly, homotetramer.

It catalyses the reaction IMP + NH4(+) + NADP(+) = GMP + NADPH + 2 H(+). Its function is as follows. Catalyzes the irreversible NADPH-dependent deamination of GMP to IMP. It functions in the conversion of nucleobase, nucleoside and nucleotide derivatives of G to A nucleotides, and in maintaining the intracellular balance of A and G nucleotides. This Caenorhabditis elegans protein is GMP reductase.